Consider the following 696-residue polypeptide: Serotransferrin (696 aa).

Transferrin-like domains lie at 6 to 332 (VRWC…NLRE) and 346 to 672 (VRWC…NLRK). 2 disulfides stabilise this stretch: Cys9-Cys47 and Cys19-Cys38. Arg23 bears the Dimethylated arginine mark. N-linked (GlcNAc...) asparagine glycosylation is present at Asn25. Fe(3+) is bound by residues Asp62 and Tyr94. Intrachain disulfides connect Cys117–Cys198, Cys157–Cys173, Cys160–Cys181, Cys170–Cys183, and Cys231–Cys245. Hydrogencarbonate-binding residues include Thr119, Arg123, Ala125, and Gly126. Tyr192 contributes to the Fe(3+) binding site. His253 is a binding site for Fe(3+). 11 disulfide bridges follow: Cys343–Cys605, Cys349–Cys381, Cys359–Cys372, Cys406–Cys682, Cys423–Cys646, Cys456–Cys532, Cys480–Cys673, Cys490–Cys504, Cys501–Cys515, Cys572–Cys586, and Cys624–Cys629. A Phosphoserine modification is found at Ser374. The Fe(3+) site is built by Asp396 and Tyr431. Residues Thr458, Arg462, Ala464, and Gly465 each coordinate hydrogencarbonate. Asn497 carries N-linked (GlcNAc...) asparagine glycosylation. Tyr526 provides a ligand contact to Fe(3+). Residue His594 coordinates Fe(3+). Ser674 is modified (phosphoserine).

The protein belongs to the transferrin family. In terms of assembly, monomer. Part of a complex composed of SLC40A1/ferroportin, TF/transferrin and HEPH/hephaestin that transfers iron from cells to transferrin. Expressed by the liver and secreted in plasma.

It is found in the secreted. Transferrins are iron binding transport proteins which can bind two Fe(3+) ions in association with the binding of an anion, usually bicarbonate. It is responsible for the transport of iron from sites of absorption and heme degradation to those of storage and utilization. Serum transferrin may also have a further role in stimulating cell proliferation. The protein is Serotransferrin (TF) of Sus scrofa (Pig).